A 289-amino-acid chain; its full sequence is Protease HtpX (289 aa).

A run of 2 helical transmembrane segments spans residues 6–26 (ILFL…LNII) and 38–58 (TGIL…SLFM). Position 144 (histidine 144) interacts with Zn(2+). Glutamate 145 is an active-site residue. Position 148 (histidine 148) interacts with Zn(2+). The next 2 membrane-spanning stretches (helical) occupy residues 152 to 172 (GDMV…IFLS) and 194 to 214 (LVFW…ATMI). Residue glutamate 223 participates in Zn(2+) binding.

This sequence belongs to the peptidase M48B family. Zn(2+) is required as a cofactor.

It localises to the cell inner membrane. This is Protease HtpX from Haemophilus ducreyi (strain 35000HP / ATCC 700724).